The chain runs to 476 residues: Hyaluronidase-2 (476 aa).

Residues Met1–Ala20 form the signal peptide. 2 disulfides stabilise this stretch: Cys47–Cys343 and Cys214–Cys230. Asn77 and Asn106 each carry an N-linked (GlcNAc...) asparagine glycan. Glu138 acts as the Proton donor in catalysis. N-linked (GlcNAc...) asparagine glycans are attached at residues Asn340 and Asn360. An EGF-like domain is found at Ala364–Gln442. Intrachain disulfides connect Cys368/Cys379, Cys373/Cys430, and Cys432/Cys441. The GPI-anchor amidated glycine moiety is linked to residue Gly451. Positions Ala452 to Ser476 are cleaved as a propeptide — removed in mature form.

This sequence belongs to the glycosyl hydrolase 56 family. In terms of assembly, interacts with MST1R. As to quaternary structure, (Microbial infection) Interacts with Jaagsiekte sheep retrovirus (JSRV) envelope proteins.

It is found in the cell membrane. It carries out the reaction Random hydrolysis of (1-&gt;4)-linkages between N-acetyl-beta-D-glucosamine and D-glucuronate residues in hyaluronate.. Its function is as follows. Catalyzes hyaluronan degradation into small fragments that are endocytosed and degraded in lysosomes by HYAL1 and exoglycosidases. Essential for the breakdown of extracellular matrix hyaluronan. This is Hyaluronidase-2 (HYAL2) from Ovis aries (Sheep).